A 259-amino-acid chain; its full sequence is Imidazole glycerol phosphate synthase subunit HisF (259 aa).

Catalysis depends on residues Asp-11 and Asp-130.

This sequence belongs to the HisA/HisF family. As to quaternary structure, heterodimer of HisH and HisF.

It localises to the cytoplasm. It catalyses the reaction 5-[(5-phospho-1-deoxy-D-ribulos-1-ylimino)methylamino]-1-(5-phospho-beta-D-ribosyl)imidazole-4-carboxamide + L-glutamine = D-erythro-1-(imidazol-4-yl)glycerol 3-phosphate + 5-amino-1-(5-phospho-beta-D-ribosyl)imidazole-4-carboxamide + L-glutamate + H(+). It participates in amino-acid biosynthesis; L-histidine biosynthesis; L-histidine from 5-phospho-alpha-D-ribose 1-diphosphate: step 5/9. Functionally, IGPS catalyzes the conversion of PRFAR and glutamine to IGP, AICAR and glutamate. The HisF subunit catalyzes the cyclization activity that produces IGP and AICAR from PRFAR using the ammonia provided by the HisH subunit. This Carboxydothermus hydrogenoformans (strain ATCC BAA-161 / DSM 6008 / Z-2901) protein is Imidazole glycerol phosphate synthase subunit HisF.